Reading from the N-terminus, the 365-residue chain is Keratin-associated protein 10-6 (365 aa).

29 repeat units span residues 41-45 (CCEPP), 46-50 (CCAPA), 67-71 (CCPVT), 89-93 (CCQQS), 99-103 (CCASS), 109-113 (CCVPV), 114-118 (CCKTV), 119-123 (CCKPV), 124-128 (CCVSV), 129-133 (CCGDS), 135-139 (CCQQS), 145-149 (CCTSS), 155-159 (CCVPV), 160-164 (CCKPV), 172-176 (CCQQS), 186-190 (CCQAV), 208-212 (CCQQS), 218-222 (CCTSS), 228-232 (CCVPV), 233-237 (CCVPV), 238-242 (CCVPT), 250-254 (CCQQS), 260-264 (CCTSS), 270-274 (CCVPV), 282-286 (CCQQS), 292-296 (CCTAS), 297-301 (CCRSS), 316-320 (CCVPV), and 334-338 (CCRTA). The 29 X 5 AA repeats of C-C-X(3) stretch occupies residues 41-338 (CCEPPCCAPA…SCQPSCCRTA (298 aa)).

This sequence belongs to the KRTAP type 10 family. In terms of assembly, interacts with hair keratins. Restricted to a narrow region of the hair fiber cuticle, lying approximately 20 cell layers above the apex of the dermal papilla of the hair root; not detected in any other tissues.

In the hair cortex, hair keratin intermediate filaments are embedded in an interfilamentous matrix, consisting of hair keratin-associated proteins (KRTAP), which are essential for the formation of a rigid and resistant hair shaft through their extensive disulfide bond cross-linking with abundant cysteine residues of hair keratins. The matrix proteins include the high-sulfur and high-glycine-tyrosine keratins. The sequence is that of Keratin-associated protein 10-6 (KRTAP10-6) from Homo sapiens (Human).